Consider the following 290-residue polypeptide: MERTENLKKGEKGALLNIFAYVILAVVKLVIGILYHSEALRADGLNNGTDIVASVAVLIGLRISQRPADSDHPYGHYRAETISSLVASFIMMAVGIEVLIGGGKAIAGGTTETPNLIAAWTALGSAVFMYGIYLYNKRLAASIKSSALMAAAKDSRSDAFVSAGAFIGVFSSQLKLPWVDPVTAFIIGIIICKTAWDIFKDASHSLTDGFHLKDLEPYKQTVGRIENVHRLKDVKARYLGSTVHIEMVITVDPKLTVEEGHGVADEVEDKIKHEHDVTHVHVHVEPDDIK.

The next 5 membrane-spanning stretches (helical) occupy residues 14 to 34 (ALLN…IGIL), 82 to 102 (ISSL…LIGG), 115 to 135 (NLIA…IYLY), 158 to 174 (DAFV…SSQL), and 176 to 196 (LPWV…KTAW).

Belongs to the cation diffusion facilitator (CDF) transporter (TC 2.A.4) family.

It localises to the cell membrane. This is an uncharacterized protein from Bacillus subtilis (strain 168).